Here is a 58-residue protein sequence, read N- to C-terminus: MAQVTVGENEGVESALRRFKRAVSKAGIFSDLKRIRHHETPVEKYKRKAQQRRRSRRR.

The disordered stretch occupies residues 31 to 58 (DLKRIRHHETPVEKYKRKAQQRRRSRRR). Residues 45–58 (YKRKAQQRRRSRRR) show a composition bias toward basic residues.

The protein belongs to the bacterial ribosomal protein bS21 family.

In Prochlorococcus marinus (strain MIT 9303), this protein is Small ribosomal subunit protein bS21.